The sequence spans 311 residues: tRNA-cytidine(32) 2-sulfurtransferase (311 aa).

A PP-loop motif motif is present at residues 47–52 (SGGKDS). 3 residues coordinate [4Fe-4S] cluster: Cys122, Cys125, and Cys213.

The protein belongs to the TtcA family. In terms of assembly, homodimer. Mg(2+) serves as cofactor. It depends on [4Fe-4S] cluster as a cofactor.

Its subcellular location is the cytoplasm. It catalyses the reaction cytidine(32) in tRNA + S-sulfanyl-L-cysteinyl-[cysteine desulfurase] + AH2 + ATP = 2-thiocytidine(32) in tRNA + L-cysteinyl-[cysteine desulfurase] + A + AMP + diphosphate + H(+). It participates in tRNA modification. Functionally, catalyzes the ATP-dependent 2-thiolation of cytidine in position 32 of tRNA, to form 2-thiocytidine (s(2)C32). The sulfur atoms are provided by the cysteine/cysteine desulfurase (IscS) system. This chain is tRNA-cytidine(32) 2-sulfurtransferase, found in Salmonella typhi.